A 551-amino-acid polypeptide reads, in one-letter code: Adenylyl cyclase-associated protein (551 aa).

A disordered region spans residues 34–55; it reads SGHKPLPNMHRPSRDSNSQTHN. The residue at position 92 (S92) is a Phosphoserine. At T96 the chain carries Phosphothreonine. Residues 288 to 300 show a composition bias toward polar residues; it reads SASKTQAPSSGDS. Disordered regions lie at residues 288–333 and 348–395; these read SASK…NKGD and TSGL…PVKP. Pro residues predominate over residues 305–315; the sequence is LPPPPPPPPPS. Positions 352 to 361 are enriched in basic and acidic residues; the sequence is RKVDKSEMTH. Positions 395-529 constitute a C-CAP/cofactor C-like domain; it reads PPRIELENTK…EEGDYAERAV (135 aa).

The protein belongs to the CAP family.

Functionally, the N-terminal domain binds to adenylyl cyclase, thereby enabling adenylyl cyclase to be activated by upstream regulatory signals, such as Ras. The C-terminal domain is required for normal cellular morphology and growth control. In Schizosaccharomyces pombe (strain 972 / ATCC 24843) (Fission yeast), this protein is Adenylyl cyclase-associated protein (cap1).